The following is a 96-amino-acid chain: Co-chaperonin GroES (96 aa).

Belongs to the GroES chaperonin family. Heptamer of 7 subunits arranged in a ring. Interacts with the chaperonin GroEL.

It is found in the cytoplasm. In terms of biological role, together with the chaperonin GroEL, plays an essential role in assisting protein folding. The GroEL-GroES system forms a nano-cage that allows encapsulation of the non-native substrate proteins and provides a physical environment optimized to promote and accelerate protein folding. GroES binds to the apical surface of the GroEL ring, thereby capping the opening of the GroEL channel. This chain is Co-chaperonin GroES, found in Hydrogenobaculum sp. (strain Y04AAS1).